Consider the following 325-residue polypeptide: Undecaprenyl-phosphate 4-deoxy-4-formamido-L-arabinose transferase (325 aa).

2 helical membrane passes run 236–256 and 270–290; these read LSIF…LLIL and VFTL…GMGL.

Belongs to the glycosyltransferase 2 family.

The protein localises to the cell inner membrane. It catalyses the reaction UDP-4-deoxy-4-formamido-beta-L-arabinose + di-trans,octa-cis-undecaprenyl phosphate = 4-deoxy-4-formamido-alpha-L-arabinopyranosyl di-trans,octa-cis-undecaprenyl phosphate + UDP. Its pathway is glycolipid biosynthesis; 4-amino-4-deoxy-alpha-L-arabinose undecaprenyl phosphate biosynthesis; 4-amino-4-deoxy-alpha-L-arabinose undecaprenyl phosphate from UDP-4-deoxy-4-formamido-beta-L-arabinose and undecaprenyl phosphate: step 1/2. It participates in bacterial outer membrane biogenesis; lipopolysaccharide biosynthesis. Its function is as follows. Catalyzes the transfer of 4-deoxy-4-formamido-L-arabinose from UDP to undecaprenyl phosphate. The modified arabinose is attached to lipid A and is required for resistance to polymyxin and cationic antimicrobial peptides. The polypeptide is Undecaprenyl-phosphate 4-deoxy-4-formamido-L-arabinose transferase (Edwardsiella ictaluri (strain 93-146)).